Here is a 378-residue protein sequence, read N- to C-terminus: MSTSAPAALRKTALNAVHRRLGAKMVDFGGWDMPVEYSGLIAEHMAVRTGVGLFDVSHMGDIQLRGPGSLDAVQHICMNDASKLAVGQAHYSAMLYPQGTFVDDVIVHKFSDNDYLIVINAGTREKDYEWIRSHAQPFHCHVSNYSDLYTQLAIQGPRAAETLAKLTSVDLAAIKNYRFTWGTVCNLHNTLIARTGYTGEDGFEIYIPSDEATSERVWNEVLEAGKEFGIVPCGLGARNTLRLESAMALYGHEISQDIDVFEAGLDRYCKLDKGTFVGSEALKQVVAQGGPKRKLVGLEMIDRGIARDGYRVLNDTQQAVGYVTSGSPAPFLKKNIALAYVPTELATLDREVFVEIRNNPVKARIVPTPFYRRPKKQA.

It belongs to the GcvT family. The glycine cleavage system is composed of four proteins: P, T, L and H.

It carries out the reaction N(6)-[(R)-S(8)-aminomethyldihydrolipoyl]-L-lysyl-[protein] + (6S)-5,6,7,8-tetrahydrofolate = N(6)-[(R)-dihydrolipoyl]-L-lysyl-[protein] + (6R)-5,10-methylene-5,6,7,8-tetrahydrofolate + NH4(+). In terms of biological role, the glycine cleavage system catalyzes the degradation of glycine. This Acidobacterium capsulatum (strain ATCC 51196 / DSM 11244 / BCRC 80197 / JCM 7670 / NBRC 15755 / NCIMB 13165 / 161) protein is Aminomethyltransferase.